Reading from the N-terminus, the 510-residue chain is Putative glycerol-3-phosphate transporter 3 (510 aa).

A run of 12 helical transmembrane segments spans residues 31–51, 91–111, 123–143, 158–178, 185–205, 217–237, 279–299, 331–351, 355–375, 378–398, 436–456, and 459–479; these read LSFK…YIAF, ALLG…MFVA, FLTI…VAFW, LAGW…GNWF, VIMG…TLIA, FVGP…FLPV, VGFL…CLFF, GNLS…AGYF, LDGR…ALFL, IYGH…GLFV, TGSV…AISW, and VFYM…TLII.

The protein belongs to the major facilitator superfamily. Organophosphate:Pi antiporter (OPA) (TC 2.A.1.4) family.

Its subcellular location is the membrane. This is Putative glycerol-3-phosphate transporter 3 from Arabidopsis thaliana (Mouse-ear cress).